A 589-amino-acid chain; its full sequence is Kelch-like protein 25 (589 aa).

A BTB domain is found at 46–114 (TDMTLWAGNR…AYSSKIIINE (69 aa)). The 102-residue stretch at 149–250 (CLGMMILSDA…LPSELLKEAV (102 aa)) folds into the BACK domain. Kelch repeat units lie at residues 296 to 340 (TLLI…AIGC), 341 to 388 (KVYI…ELDN), 389 to 444 (CLYV…SAKL), 446 to 492 (LFVF…VLGS), 494 to 538 (IFIM…ASGN), and 539 to 585 (KVYV…STWK).

Component of the BCR(KLHL25) E3 ubiquitin ligase complex, at least composed of cul3, klhl25 and rbx1.

The protein operates within protein modification; protein ubiquitination. Functionally, substrate-specific adapter of a BCR (BTB-CUL3-RBX1) E3 ubiquitin ligase complex involved in various processes, such as translation homeostasis and lipid synthesis. The BCR(KLHL25) ubiquitin ligase complex acts by mediating ubiquitination of hypophosphorylated eif4ebp1 (4E-BP1): ubiquitination and subsequent degradation of hypophosphorylated EIF4EBP1 (4E-BP1) probably serves as a homeostatic mechanism to maintain translation and prevent eIF4E inhibition when eIF4E levels are low. The BCR(KLHL25) complex also acts as a regulator of lipid synthesis by mediating ubiquitination and degradation of ACLY, thereby inhibiting lipid synthesis. The protein is Kelch-like protein 25 of Xenopus laevis (African clawed frog).